The chain runs to 181 residues: 3-hexulose-6-phosphate isomerase (181 aa).

The region spanning 27–168 is the SIS domain; the sequence is ILSLVDAAGR…IAKLVDQKGL (142 aa). Substrate contacts are provided by residues serine 45 and 84–89; that span reads SGSGST. Residue glutamate 148 is the Proton acceptor of the active site.

It belongs to the SIS family. PHI subfamily. In terms of assembly, homodimer.

The catalysed reaction is D-arabino-hex-3-ulose 6-phosphate = beta-D-fructose 6-phosphate. It functions in the pathway one-carbon metabolism; formaldehyde assimilation via RuMP pathway; D-fructose 6-phosphate from D-ribulose 5-phosphate and formaldehyde: step 2/2. In terms of biological role, catalyzes the isomerization between 3-hexulose 6-phosphate and fructose 6-phosphate. This Methylomonas aminofaciens protein is 3-hexulose-6-phosphate isomerase (rmpB).